The primary structure comprises 339 residues: Nicotinate-nucleotide--dimethylbenzimidazole phosphoribosyltransferase (339 aa).

Catalysis depends on Glu-306, which acts as the Proton acceptor.

It belongs to the CobT family.

The catalysed reaction is 5,6-dimethylbenzimidazole + nicotinate beta-D-ribonucleotide = alpha-ribazole 5'-phosphate + nicotinate + H(+). Its pathway is nucleoside biosynthesis; alpha-ribazole biosynthesis; alpha-ribazole from 5,6-dimethylbenzimidazole: step 1/2. Its function is as follows. Catalyzes the synthesis of alpha-ribazole-5'-phosphate from nicotinate mononucleotide (NAMN) and 5,6-dimethylbenzimidazole (DMB). This Brucella melitensis biotype 1 (strain ATCC 23456 / CCUG 17765 / NCTC 10094 / 16M) protein is Nicotinate-nucleotide--dimethylbenzimidazole phosphoribosyltransferase.